Here is a 318-residue protein sequence, read N- to C-terminus: Pantothenate kinase (318 aa).

G96 to S103 contacts ATP.

This sequence belongs to the prokaryotic pantothenate kinase family.

The protein resides in the cytoplasm. It catalyses the reaction (R)-pantothenate + ATP = (R)-4'-phosphopantothenate + ADP + H(+). The protein operates within cofactor biosynthesis; coenzyme A biosynthesis; CoA from (R)-pantothenate: step 1/5. The protein is Pantothenate kinase of Coxiella burnetii (strain Dugway 5J108-111).